A 148-amino-acid polypeptide reads, in one-letter code: Large ribosomal subunit protein uL15 (148 aa).

Residues 1-51 (MNLSSLKPAEGAVKSRKRIGRGPGSGLGGTSTRGHKGAKSRSGYSKKIGFE) are disordered. Positions 21 to 31 (RGPGSGLGGTS) are enriched in gly residues.

This sequence belongs to the universal ribosomal protein uL15 family. As to quaternary structure, part of the 50S ribosomal subunit.

Its function is as follows. Binds to the 23S rRNA. The sequence is that of Large ribosomal subunit protein uL15 from Porphyromonas gingivalis (strain ATCC BAA-308 / W83).